Here is a 150-residue protein sequence, read N- to C-terminus: Small ribosomal subunit protein eS6 (150 aa).

Belongs to the eukaryotic ribosomal protein eS6 family.

The polypeptide is Small ribosomal subunit protein eS6 (Caldivirga maquilingensis (strain ATCC 700844 / DSM 13496 / JCM 10307 / IC-167)).